Here is a 50-residue protein sequence, read N- to C-terminus: Omwaprin-a (50 aa).

The WAP domain maps to 3 to 47; it reads RPKKPGLCPPRPQKPCVKECKNDDSCPGQQKCCNYGCKDECRDPI. Cystine bridges form between Cys10–Cys35, Cys18–Cys39, Cys22–Cys34, and Cys28–Cys43.

This sequence belongs to the venom waprin family. Expressed by the venom gland.

Its subcellular location is the secreted. In terms of biological role, damages membranes of susceptible bacteria. Has antibacterial activity against the Gram-positive bacteria B.megaterium and S.warneri. After a 45-minute treatment with this protein, B.megaterium have no visible pili and are smooth. Has no antibacterial activity against the Gram-positive bacteria B.thuringiensis, S.aureus, S.clavuligerus and B.anthracis, or the Gram-negative bacteria E.coli and A.tumefaciens. Has no hemolytic activity. Does not inhibit the proteinases elastase and cathepsin G. Is not toxic to mice. The chain is Omwaprin-a from Oxyuranus microlepidotus (Inland taipan).